Reading from the N-terminus, the 253-residue chain is Pimeloyl-[acyl-carrier protein] methyl ester esterase (253 aa).

Substrate is bound by residues Trp18, 78 to 79 (SL), and 139 to 143 (FLALD). The Nucleophile role is filled by Ser78. Residues Asp203 and His231 contribute to the active site. Substrate is bound at residue His231.

It belongs to the AB hydrolase superfamily. Carboxylesterase BioH family. Monomer.

The protein localises to the cytoplasm. It catalyses the reaction 6-carboxyhexanoyl-[ACP] methyl ester + H2O = 6-carboxyhexanoyl-[ACP] + methanol + H(+). Its pathway is cofactor biosynthesis; biotin biosynthesis. Its function is as follows. The physiological role of BioH is to remove the methyl group introduced by BioC when the pimeloyl moiety is complete. It allows to synthesize pimeloyl-ACP via the fatty acid synthetic pathway through the hydrolysis of the ester bonds of pimeloyl-ACP esters. The polypeptide is Pimeloyl-[acyl-carrier protein] methyl ester esterase (Xanthomonas axonopodis pv. citri (strain 306)).